A 1119-amino-acid polypeptide reads, in one-letter code: Isoleucine--tRNA ligase (1119 aa).

Residues Met1–Pro43 are disordered. Residues Pro84–His94 carry the 'HIGH' region motif. Residues Lys676–Ser680 carry the 'KMSKS' region motif. Lys679 serves as a coordination point for ATP.

It belongs to the class-I aminoacyl-tRNA synthetase family. IleS type 2 subfamily. Monomer. The cofactor is Zn(2+).

The protein localises to the cytoplasm. The enzyme catalyses tRNA(Ile) + L-isoleucine + ATP = L-isoleucyl-tRNA(Ile) + AMP + diphosphate. Catalyzes the attachment of isoleucine to tRNA(Ile). As IleRS can inadvertently accommodate and process structurally similar amino acids such as valine, to avoid such errors it has two additional distinct tRNA(Ile)-dependent editing activities. One activity is designated as 'pretransfer' editing and involves the hydrolysis of activated Val-AMP. The other activity is designated 'posttransfer' editing and involves deacylation of mischarged Val-tRNA(Ile). This is Isoleucine--tRNA ligase from Leifsonia xyli subsp. xyli (strain CTCB07).